The chain runs to 222 residues: 3-dehydroquinate dehydratase (222 aa).

Residues 32 to 34 (ELR) and arginine 64 contribute to the 3-dehydroquinate site. Histidine 117 serves as the catalytic Proton donor/acceptor. Catalysis depends on lysine 143, which acts as the Schiff-base intermediate with substrate. Arginine 181 is a binding site for 3-dehydroquinate.

It belongs to the type-I 3-dehydroquinase family. In terms of assembly, homodimer.

The catalysed reaction is 3-dehydroquinate = 3-dehydroshikimate + H2O. The protein operates within metabolic intermediate biosynthesis; chorismate biosynthesis; chorismate from D-erythrose 4-phosphate and phosphoenolpyruvate: step 3/7. Involved in the third step of the chorismate pathway, which leads to the biosynthesis of aromatic amino acids. Catalyzes the cis-dehydration of 3-dehydroquinate (DHQ) and introduces the first double bond of the aromatic ring to yield 3-dehydroshikimate. The sequence is that of 3-dehydroquinate dehydratase from Aeropyrum pernix (strain ATCC 700893 / DSM 11879 / JCM 9820 / NBRC 100138 / K1).